A 339-amino-acid polypeptide reads, in one-letter code: tRNA N6-adenosine threonylcarbamoyltransferase (339 aa).

The Fe cation site is built by histidine 111 and histidine 115. Substrate is bound by residues 134-138 (LVSGG), aspartate 167, glycine 180, and asparagine 272. Residue aspartate 300 coordinates Fe cation.

It belongs to the KAE1 / TsaD family. Fe(2+) serves as cofactor.

The protein resides in the cytoplasm. It carries out the reaction L-threonylcarbamoyladenylate + adenosine(37) in tRNA = N(6)-L-threonylcarbamoyladenosine(37) in tRNA + AMP + H(+). Its function is as follows. Required for the formation of a threonylcarbamoyl group on adenosine at position 37 (t(6)A37) in tRNAs that read codons beginning with adenine. Is involved in the transfer of the threonylcarbamoyl moiety of threonylcarbamoyl-AMP (TC-AMP) to the N6 group of A37, together with TsaE and TsaB. TsaD likely plays a direct catalytic role in this reaction. In Sodalis glossinidius (strain morsitans), this protein is tRNA N6-adenosine threonylcarbamoyltransferase.